We begin with the raw amino-acid sequence, 115 residues long: T cell receptor beta variable 11-3 (115 aa).

Positions 1 to 21 (MGTRLLCWVAFCLLVEELIEA) are cleaved as a signal peptide. Residues 22–115 (GVVQSPRYKI…SAVYLCASSL (94 aa)) form the Ig-like domain. A disulfide bridge links Cys-42 with Cys-111.

In terms of assembly, alpha-beta TR is a heterodimer composed of an alpha and beta chain; disulfide-linked. The alpha-beta TR is associated with the transmembrane signaling CD3 coreceptor proteins to form the TR-CD3 (TcR or TCR). The assembly of alpha-beta TR heterodimers with CD3 occurs in the endoplasmic reticulum where a single alpha-beta TR heterodimer associates with one CD3D-CD3E heterodimer, one CD3G-CD3E heterodimer and one CD247 homodimer forming a stable octameric structure. CD3D-CD3E and CD3G-CD3E heterodimers preferentially associate with TR alpha and TR beta chains, respectively. The association of the CD247 homodimer is the last step of TcR assembly in the endoplasmic reticulum and is required for transport to the cell surface.

It localises to the cell membrane. In terms of biological role, v region of the variable domain of T cell receptor (TR) beta chain that participates in the antigen recognition. Alpha-beta T cell receptors are antigen specific receptors which are essential to the immune response and are present on the cell surface of T lymphocytes. Recognize peptide-major histocompatibility (MH) (pMH) complexes that are displayed by antigen presenting cells (APC), a prerequisite for efficient T cell adaptive immunity against pathogens. Binding of alpha-beta TR to pMH complex initiates TR-CD3 clustering on the cell surface and intracellular activation of LCK that phosphorylates the ITAM motifs of CD3G, CD3D, CD3E and CD247 enabling the recruitment of ZAP70. In turn ZAP70 phosphorylates LAT, which recruits numerous signaling molecules to form the LAT signalosome. The LAT signalosome propagates signal branching to three major signaling pathways, the calcium, the mitogen-activated protein kinase (MAPK) kinase and the nuclear factor NF-kappa-B (NF-kB) pathways, leading to the mobilization of transcription factors that are critical for gene expression and essential for T cell growth and differentiation. The T cell repertoire is generated in the thymus, by V-(D)-J rearrangement. This repertoire is then shaped by intrathymic selection events to generate a peripheral T cell pool of self-MH restricted, non-autoaggressive T cells. Post-thymic interaction of alpha-beta TR with the pMH complexes shapes TR structural and functional avidity. In Homo sapiens (Human), this protein is T cell receptor beta variable 11-3.